Consider the following 332-residue polypeptide: tRNA U34 carboxymethyltransferase (332 aa).

Residues Lys-96, Trp-110, Lys-115, Gly-135, 157–159, 190–191, Met-205, Tyr-209, and Arg-324 each bind carboxy-S-adenosyl-L-methionine; these read DPT and IE.

This sequence belongs to the class I-like SAM-binding methyltransferase superfamily. CmoB family. Homotetramer.

The catalysed reaction is carboxy-S-adenosyl-L-methionine + 5-hydroxyuridine(34) in tRNA = 5-carboxymethoxyuridine(34) in tRNA + S-adenosyl-L-homocysteine + H(+). In terms of biological role, catalyzes carboxymethyl transfer from carboxy-S-adenosyl-L-methionine (Cx-SAM) to 5-hydroxyuridine (ho5U) to form 5-carboxymethoxyuridine (cmo5U) at position 34 in tRNAs. This Alteromonas mediterranea (strain DSM 17117 / CIP 110805 / LMG 28347 / Deep ecotype) protein is tRNA U34 carboxymethyltransferase.